The chain runs to 142 residues: Deoxyuridine 5'-triphosphate nucleotidohydrolase (142 aa).

Belongs to the dUTPase family. It depends on Mg(2+) as a cofactor.

The enzyme catalyses dUTP + H2O = dUMP + diphosphate + H(+). This enzyme is involved in nucleotide metabolism: it produces dUMP, the immediate precursor of thymidine nucleotides and it decreases the intracellular concentration of dUTP so that uracil cannot be incorporated into DNA. This is Deoxyuridine 5'-triphosphate nucleotidohydrolase (DUT) from Swinepox virus (strain Kasza) (SWPV).